We begin with the raw amino-acid sequence, 384 residues long: Toluene efflux pump periplasmic linker protein TtgA (384 aa).

Positions M1 to G22 are cleaved as a signal peptide. The N-palmitoyl cysteine moiety is linked to residue C23. A lipid anchor (S-diacylglycerol cysteine) is attached at C23. Residues L115–R155 adopt a coiled-coil conformation. The segment at A362 to E384 is disordered. The span at P368 to K378 shows a compositional bias: low complexity.

This sequence belongs to the membrane fusion protein (MFP) (TC 8.A.1) family.

It is found in the cell inner membrane. In terms of biological role, the periplasmic linker protein component of a constitutive organic solvent efflux system. Involved in export of toluene, styrene, m-xylene, propylbenzene and ethylbenzene. Also exports AMP and the antibiotics carbenicillin, nalidixic acid, chloramphenicol and tetracycline. This chain is Toluene efflux pump periplasmic linker protein TtgA (ttgA), found in Pseudomonas putida (strain DOT-T1E).